A 416-amino-acid chain; its full sequence is Gamma-glutamyl phosphate reductase (416 aa).

The protein belongs to the gamma-glutamyl phosphate reductase family.

It localises to the cytoplasm. The enzyme catalyses L-glutamate 5-semialdehyde + phosphate + NADP(+) = L-glutamyl 5-phosphate + NADPH + H(+). It functions in the pathway amino-acid biosynthesis; L-proline biosynthesis; L-glutamate 5-semialdehyde from L-glutamate: step 2/2. Its function is as follows. Catalyzes the NADPH-dependent reduction of L-glutamate 5-phosphate into L-glutamate 5-semialdehyde and phosphate. The product spontaneously undergoes cyclization to form 1-pyrroline-5-carboxylate. This is Gamma-glutamyl phosphate reductase from Streptococcus thermophilus (strain CNRZ 1066).